The chain runs to 353 residues: Guanidino acid hydrolase, mitochondrial (353 aa).

Residues 1–33 (MLQLLKSSWVRSAGSGVVTWRASAGLFCPGTRQ) constitute a mitochondrion transit peptide. The tract at residues 29–52 (PGTRQASDTSDTLHHPSPSSESQV) is disordered. His163 and His188 together coordinate Mn(2+). Residue Lys194 is modified to N6-acetyllysine. Lys218 is modified (N6-acetyllysine; alternate). The residue at position 218 (Lys218) is an N6-succinyllysine; alternate. Asp279 is a Mn(2+) binding site.

The protein belongs to the arginase family. Agmatinase subfamily. It depends on Mn(2+) as a cofactor.

It is found in the mitochondrion. The enzyme catalyses 3-guanidinopropanoate + H2O = urea + beta-alanine. It carries out the reaction 4-guanidinobutanoate + H2O = urea + 4-aminobutanoate. It catalyses the reaction taurocyamine + H2O = urea + taurine. The catalysed reaction is L-arginine + H2O = urea + L-ornithine. It functions in the pathway nitrogen metabolism; urea cycle; L-ornithine and urea from L-arginine: step 1/1. In terms of biological role, hydrolyzes linear guanidino acids to form urea and the corresponding amines. Displays specificity for substrates having a negatively charged head group and short chains including taurocyamine, guanidino propanoic and butanoic acids. May protect cells by detoxifying potentially harmful amounts of guanidino acids. Metabolizes L-arginine with low efficiency. The sequence is that of Guanidino acid hydrolase, mitochondrial (Agmat) from Rattus norvegicus (Rat).